The primary structure comprises 496 residues: Polyphosphate:AMP phosphotransferase (496 aa).

PPK2 stretches follow at residues 11–234 (IDKD…LQAA) and 269–495 (LDKD…YKKD).

The protein belongs to the polyphosphate kinase 2 (PPK2) family. Class II subfamily. Homodimer. Mg(2+) is required as a cofactor.

It carries out the reaction [phosphate](n) + ADP = [phosphate](n+1) + AMP. Functionally, uses inorganic polyphosphate (polyP) as a donor to convert AMP to ADP. Can also convert GMP to GDP, with lower efficiency. Cannot dephosphorylate ADP in the presence of polyP. This is Polyphosphate:AMP phosphotransferase from Pseudomonas aeruginosa (strain ATCC 15692 / DSM 22644 / CIP 104116 / JCM 14847 / LMG 12228 / 1C / PRS 101 / PAO1).